The chain runs to 470 residues: Methylenetetrahydrofolate--tRNA-(uracil-5-)-methyltransferase TrmFO (470 aa).

An FAD-binding site is contributed by 10 to 15 (GAGLAG).

Belongs to the MnmG family. TrmFO subfamily. FAD is required as a cofactor.

Its subcellular location is the cytoplasm. It carries out the reaction uridine(54) in tRNA + (6R)-5,10-methylene-5,6,7,8-tetrahydrofolate + NADH + H(+) = 5-methyluridine(54) in tRNA + (6S)-5,6,7,8-tetrahydrofolate + NAD(+). The catalysed reaction is uridine(54) in tRNA + (6R)-5,10-methylene-5,6,7,8-tetrahydrofolate + NADPH + H(+) = 5-methyluridine(54) in tRNA + (6S)-5,6,7,8-tetrahydrofolate + NADP(+). In terms of biological role, catalyzes the folate-dependent formation of 5-methyl-uridine at position 54 (M-5-U54) in all tRNAs. In Prochlorococcus marinus (strain MIT 9301), this protein is Methylenetetrahydrofolate--tRNA-(uracil-5-)-methyltransferase TrmFO.